Consider the following 244-residue polypeptide: DNA repair protein RecO (244 aa).

It belongs to the RecO family.

In terms of biological role, involved in DNA repair and RecF pathway recombination. This Ehrlichia chaffeensis (strain ATCC CRL-10679 / Arkansas) protein is DNA repair protein RecO.